The sequence spans 467 residues: 3-isopropylmalate dehydratase large subunit (467 aa).

C347, C408, and C411 together coordinate [4Fe-4S] cluster.

This sequence belongs to the aconitase/IPM isomerase family. LeuC type 1 subfamily. Heterodimer of LeuC and LeuD. [4Fe-4S] cluster is required as a cofactor.

It carries out the reaction (2R,3S)-3-isopropylmalate = (2S)-2-isopropylmalate. Its pathway is amino-acid biosynthesis; L-leucine biosynthesis; L-leucine from 3-methyl-2-oxobutanoate: step 2/4. Its function is as follows. Catalyzes the isomerization between 2-isopropylmalate and 3-isopropylmalate, via the formation of 2-isopropylmaleate. This is 3-isopropylmalate dehydratase large subunit from Bordetella bronchiseptica (strain ATCC BAA-588 / NCTC 13252 / RB50) (Alcaligenes bronchisepticus).